Consider the following 182-residue polypeptide: MKVNKKRLAEIFNVDPRTIERWQSQGLPCASKGSKGIESVFDTAMAIQWYAQRETDIENEKLRKELDDLRAAAESDLQPGTIDYERYRLTKAQADAQELKNAREDGVVLETELFTFILQRVAQEISGILVRVPLTLQRKYPDISPSHLDVVKTEIAKASNVAAKAGENVGGWIDDFRRAEGS.

ATP is bound at residue 31–36 (SKGSKG).

Belongs to the terminase small subunit family. In terms of assembly, heterooligomer of gp1 and gp2.

In terms of biological role, involved in the initiation of the phage DNA packaging into the prohead. Processes replicating concatemeric DNA into pieces of unit length with cohesive ends. In Escherichia coli O6:H1 (strain CFT073 / ATCC 700928 / UPEC), this protein is P21 prophage-derived terminase small subunit (nohA).